The sequence spans 295 residues: Protoheme IX farnesyltransferase 2 (295 aa).

9 helical membrane passes run 9-29 (ITKPGIIFGNVLSVAGGFFLA), 36-56 (FALFLAVVIGTSLVVASGCVF), 83-103 (LPLALIYATLLGVAGFSLLYV), 108-128 (LSAFCALIGFVVYVGFYSLWL), 135-155 (GTLVGSLSGAMPPVIGYCAVS), 163-183 (VTLLVMFSLWQMPHSFAIAIF), 209-229 (IVLYVLAFVLATLMLTLGGYA), 230-250 (GLGYLAVAAAMGLYWLYMAWG), and 264-284 (VFGFSILTVTALSVMMGVDSQ).

It belongs to the UbiA prenyltransferase family. Protoheme IX farnesyltransferase subfamily.

The protein localises to the cell inner membrane. The enzyme catalyses heme b + (2E,6E)-farnesyl diphosphate + H2O = Fe(II)-heme o + diphosphate. It participates in porphyrin-containing compound metabolism; heme O biosynthesis; heme O from protoheme: step 1/1. In terms of biological role, converts heme B (protoheme IX) to heme O by substitution of the vinyl group on carbon 2 of heme B porphyrin ring with a hydroxyethyl farnesyl side group. This Pseudomonas putida (strain ATCC 47054 / DSM 6125 / CFBP 8728 / NCIMB 11950 / KT2440) protein is Protoheme IX farnesyltransferase 2.